Reading from the N-terminus, the 556-residue chain is Innexin-7 (556 aa).

Transmembrane regions (helical) follow at residues 21-41 (LVAS…AVLI), 127-147 (FFLL…KYFA), and 213-233 (AYYV…NVIL). An N-linked (GlcNAc...) asparagine glycan is attached at Asn-267. A helical transmembrane segment spans residues 310–330 (IFVFLWAWYILLTAFTVGNLF). A disordered region spans residues 431–556 (DESQVESGKN…IPKTAEKKHW (126 aa)). Over residues 435–447 (VESGKNTAPSTSH) the composition is skewed to polar residues. Over residues 452 to 461 (RGTEQLEKNV) the composition is skewed to basic and acidic residues. Residues 463-474 (SRQGSLSTQLRP) are compositionally biased toward polar residues. Over residues 500–513 (KGSKKPSPTKKKAS) the composition is skewed to basic residues. The span at 514 to 527 (SKNSPQSSSNSRRP) shows a compositional bias: low complexity. A compositionally biased stretch (basic and acidic residues) spans 539–556 (HHHEPDSKIPKTAEKKHW).

This sequence belongs to the pannexin family.

It is found in the cell membrane. It localises to the cell junction. The protein localises to the gap junction. In terms of biological role, structural component of the gap junctions. The polypeptide is Innexin-7 (inx-7) (Caenorhabditis elegans).